Here is an 864-residue protein sequence, read N- to C-terminus: Xylosyltransferase 2 (864 aa).

Topologically, residues 1–15 (MVASARVQKLVRRYK) are cytoplasmic. Residues 16-36 (LAIATALAILLLQGLVVWSFS) traverse the membrane as a helical; Signal-anchor for type II membrane protein segment. Over 37-864 (GLEEDEPGEK…GPVKADGRLR (828 aa)) the chain is Lumenal. 2 disordered regions span residues 39–123 (EEDE…RQNL) and 136–158 (AGFP…DNSF). Residues 53 to 65 (RPLDPGEGSKDTD) are compositionally biased toward basic and acidic residues. Residues 73–82 (SAGRRHGRWR) are compositionally biased toward basic residues. A glycan (N-linked (GlcNAc...) asparagine) is linked at Asn122. 4 cysteine pairs are disulfide-bonded: Cys162-Cys190, Cys206-Cys448, Cys467-Cys480, and Cys469-Cys478. UDP-alpha-D-xylose-binding positions include Val239, Asp267, and 296–298 (TIW). Asn327 carries an N-linked (GlcNAc...) asparagine glycan. 400-401 (DW) is a UDP-alpha-D-xylose binding site. UDP-alpha-D-xylose contacts are provided by residues Ser481 and 504-505 (RK). 2 cysteine pairs are disulfide-bonded: Cys580–Cys832 and Cys825–Cys838. Asn682 is a glycosylation site (N-linked (GlcNAc...) asparagine).

It belongs to the glycosyltransferase 14 family. XylT subfamily. In terms of assembly, monomer. The cofactor is Mg(2+). Mn(2+) is required as a cofactor. Post-translationally, contains disulfide bonds.

It localises to the golgi apparatus membrane. The protein resides in the secreted. It catalyses the reaction UDP-alpha-D-xylose + L-seryl-[protein] = 3-O-(beta-D-xylosyl)-L-seryl-[protein] + UDP + H(+). It participates in glycan metabolism; chondroitin sulfate biosynthesis. It functions in the pathway glycan metabolism; heparan sulfate biosynthesis. Functionally, catalyzes the first step in the biosynthesis of chondroitin sulfate, heparan sulfate and dermatan sulfate proteoglycans, such as DCN. Transfers D-xylose from UDP-D-xylose to specific serine residues of the core protein. In Rattus norvegicus (Rat), this protein is Xylosyltransferase 2 (Xylt2).